Here is a 260-residue protein sequence, read N- to C-terminus: Ribonuclease HII (260 aa).

The 188-residue stretch at 73-260 folds into the RNase H type-2 domain; it reads LHIAGIDEAG…APVQQQLDIV (188 aa). A divalent metal cation contacts are provided by D79, E80, and D171.

This sequence belongs to the RNase HII family. Mn(2+) serves as cofactor. Mg(2+) is required as a cofactor.

The protein resides in the cytoplasm. The catalysed reaction is Endonucleolytic cleavage to 5'-phosphomonoester.. Its function is as follows. Endonuclease that specifically degrades the RNA of RNA-DNA hybrids. The sequence is that of Ribonuclease HII from Desulfitobacterium hafniense (strain DSM 10664 / DCB-2).